The following is a 363-amino-acid chain: GDSL esterase/lipase At2g24560 (363 aa).

An N-terminal signal peptide occupies residues Met1–Ala22. Asn25 carries an N-linked (GlcNAc...) asparagine glycan. Ser41 serves as the catalytic Nucleophile. N-linked (GlcNAc...) asparagine glycans are attached at residues Asn103 and Asn325. Residues Asp333 and His336 contribute to the active site.

Belongs to the 'GDSL' lipolytic enzyme family.

It is found in the secreted. The polypeptide is GDSL esterase/lipase At2g24560 (Arabidopsis thaliana (Mouse-ear cress)).